Consider the following 213-residue polypeptide: Heat shock protein 27 (213 aa).

A phosphoserine mark is found at Ser58 and Ser75. Positions 71–182 (SRRASGGPNA…SERIVQIQQT (112 aa)) constitute a sHSP domain. The disordered stretch occupies residues 157–213 (VLTLKAPPPPSKEQAKSERIVQIQQTGPAHLSVKAPAPEAGDGKAENGSGEKMETSK). Residues 197 to 213 (GDGKAENGSGEKMETSK) show a composition bias toward basic and acidic residues.

The protein belongs to the small heat shock protein (HSP20) family.

The sequence is that of Heat shock protein 27 (Hsp27) from Drosophila melanogaster (Fruit fly).